Consider the following 1063-residue polypeptide: Lysine-specific demethylase phf2 (1063 aa).

The PHD-type zinc finger occupies 5–56; it reads PVYCICRLPYDVTQFMIECDACKDWFHGSCVGVDEDEAPDIDIYHCPNCEKT. The region spanning 197–353 is the JmjC domain; sequence FSDARMANIV…MQMRAYEVEK (157 aa). T246 provides a ligand contact to 2-oxoglutarate. Fe cation is bound by residues H249 and E251. The 2-oxoglutarate site is built by Y259 and K266. N321 is a binding site for Fe cation. Disordered stretches follow at residues 448-546, 704-761, 773-864, and 879-1045; these read VSDS…LAAL, NIKE…SAGI, GIDY…DMFD, and YVYP…MATA. Low complexity predominate over residues 460 to 477; the sequence is SEPSNSKPPAEEPPSALS. Basic and acidic residues-rich tracts occupy residues 513 to 540 and 723 to 745; these read PPKEPKIKEGGKKKAKKVKEGVIPEKKP and KSPDTSDEESLHIDTEAKTDVKG. Residues 746–755 are compositionally biased toward basic residues; the sequence is RNSKVSKKKG. The segment covering 776-791 has biased composition (polar residues); it reads YSNNSQPPASPSTQEA. The span at 813–833 shows a compositional bias: low complexity; it reads SNSQAKNNSHSSAASKKPSGA. Residues 842–852 are compositionally biased toward basic residues; it reads RPAKRLPKKTQ. Positions 920-929 are enriched in basic and acidic residues; the sequence is RQERPAREGA. The segment covering 953–964 has biased composition (basic residues); it reads IKKKKKSAKKKP. The span at 965 to 975 shows a compositional bias: basic and acidic residues; the sequence is IVAEESHKLSH. Low complexity-rich tracts occupy residues 976–988 and 1021–1031; these read DSSSPEPTPDSES and SSSSSSQNASS. Residue S1021 is modified to Phosphoserine; by PKA.

Belongs to the JHDM1 histone demethylase family. JHDM1D subfamily.

It is found in the nucleus. It localises to the nucleolus. The protein resides in the chromosome. The protein localises to the centromere. Its subcellular location is the kinetochore. Its function is as follows. Lysine demethylase that demethylates both histones and non-histone proteins. Mediates demethylation of dimethylated 'Lys-9' of histone H3 (H3K9me2). Recruited to trimethylated 'Lys-4' of histone H3 (H3K4me3) at rDNA promoters and promotes expression of rDNA. The chain is Lysine-specific demethylase phf2 (phf2) from Danio rerio (Zebrafish).